Reading from the N-terminus, the 407-residue chain is Protein COS9 (407 aa).

3 consecutive transmembrane segments (helical) span residues 75–95 (TWLL…IKSI), 98–118 (IFPF…LPNI), and 261–281 (IFNL…YVSW).

Belongs to the DUP/COS family.

It is found in the membrane. This Saccharomyces cerevisiae (strain ATCC 204508 / S288c) (Baker's yeast) protein is Protein COS9 (COS9).